A 156-amino-acid polypeptide reads, in one-letter code: Small ribosomal subunit protein uS7 (156 aa).

This sequence belongs to the universal ribosomal protein uS7 family. As to quaternary structure, part of the 30S ribosomal subunit. Contacts proteins S9 and S11.

In terms of biological role, one of the primary rRNA binding proteins, it binds directly to 16S rRNA where it nucleates assembly of the head domain of the 30S subunit. Is located at the subunit interface close to the decoding center, probably blocks exit of the E-site tRNA. This chain is Small ribosomal subunit protein uS7, found in Frankia alni (strain DSM 45986 / CECT 9034 / ACN14a).